Here is a 539-residue protein sequence, read N- to C-terminus: 3-methylmercaptopropionyl-CoA ligase (539 aa).

Mg(2+) is bound at residue threonine 185. ATP contacts are provided by histidine 231, glycine 303, histidine 324, alanine 325, and serine 329. Glutamate 330 is a Mg(2+) binding site. Residues glutamine 359, aspartate 417, arginine 432, and lysine 523 each coordinate ATP.

The protein belongs to the ATP-dependent AMP-binding enzyme family. Homodimer. Mg(2+) is required as a cofactor.

It carries out the reaction 3-(methylsulfanyl)propanoate + ATP + CoA = 3-(methylsulfanyl)propanoyl-CoA + AMP + diphosphate. With respect to regulation, ADP acts as a competitive inhibitor and inhibits the ligase activity. In terms of biological role, involved in the assimilation of dimethylsulphoniopropionate (DMSP), an important compound in the fixation of carbon in marine phytoplankton. Catalyzes the ATP-dependent ligation of methylmercaptopropionate (MMPA) and CoA to yield methylmercaptopropionate-CoA (MMPA-CoA). The protein is 3-methylmercaptopropionyl-CoA ligase of Ruegeria lacuscaerulensis (strain DSM 11314 / KCTC 2953 / ITI-1157) (Silicibacter lacuscaerulensis).